A 183-amino-acid polypeptide reads, in one-letter code: Large ribosomal subunit protein uL6 (183 aa).

Belongs to the universal ribosomal protein uL6 family. Part of the 50S ribosomal subunit.

Functionally, this protein binds to the 23S rRNA, and is important in its secondary structure. It is located near the subunit interface in the base of the L7/L12 stalk, and near the tRNA binding site of the peptidyltransferase center. The polypeptide is Large ribosomal subunit protein uL6 (Parabacteroides distasonis (strain ATCC 8503 / DSM 20701 / CIP 104284 / JCM 5825 / NCTC 11152)).